A 383-amino-acid polypeptide reads, in one-letter code: uncharacterized protein (383 aa).

A run of 10 helical transmembrane segments spans residues 25 to 45 (LWVA…PAVA), 53 to 73 (IYNV…PIMV), 103 to 123 (FTMV…LLTA), 139 to 159 (IAGC…MWGY), 166 to 186 (GLTL…YAPL), 200 to 220 (WQTI…AGIY), 238 to 258 (FLHY…ILLF), 272 to 292 (IFLI…ITYV), 309 to 329 (LIGA…LFGL), and 332 to 352 (GAAL…LMLV).

It belongs to the arsenical resistance-3 (ACR3) (TC 2.A.59) family.

Its subcellular location is the cell membrane. This is an uncharacterized protein from Synechocystis sp. (strain ATCC 27184 / PCC 6803 / Kazusa).